The following is a 317-amino-acid chain: Uridine phosphorylase 2 (317 aa).

Phosphate is bound by residues G66, R100, and R144 to T147. C95 and C102 form a disulfide bridge. Uridine contacts are provided by residues S148–G149 and Q223–R225.

The protein belongs to the PNP/UDP phosphorylase family. Homodimer. As to expression, predominantly expressed in kidney.

The catalysed reaction is uridine + phosphate = alpha-D-ribose 1-phosphate + uracil. It catalyses the reaction 2'-deoxyuridine + phosphate = 2-deoxy-alpha-D-ribose 1-phosphate + uracil. Its pathway is pyrimidine metabolism; UMP biosynthesis via salvage pathway; uracil from uridine (phosphorylase route): step 1/1. Its activity is regulated as follows. A conditional disulfide bridge can form within the protein that dislocates a critical phosphate-coordinating arginine Arg-100 away from the active site, disabling the enzyme. Functionally, catalyzes the reversible phosphorylytic cleavage of uridine to uracil and ribose-1-phosphate which can then be utilized as carbon and energy sources or in the rescue of pyrimidine bases for nucleotide synthesis. Shows broad substrate specificity and can also accept deoxyuridine and other analogous compounds. The sequence is that of Uridine phosphorylase 2 from Homo sapiens (Human).